The sequence spans 240 residues: NADH-quinone oxidoreductase subunit C (240 aa).

The interval M1 to P82 is disordered. The span at L11–A20 shows a compositional bias: low complexity. Residues D67 to P82 show a composition bias toward basic and acidic residues.

It belongs to the complex I 30 kDa subunit family. NDH-1 is composed of 14 different subunits. Subunits NuoB, C, D, E, F, and G constitute the peripheral sector of the complex.

The protein localises to the cell inner membrane. It catalyses the reaction a quinone + NADH + 5 H(+)(in) = a quinol + NAD(+) + 4 H(+)(out). NDH-1 shuttles electrons from NADH, via FMN and iron-sulfur (Fe-S) centers, to quinones in the respiratory chain. The immediate electron acceptor for the enzyme in this species is believed to be a menaquinone. Couples the redox reaction to proton translocation (for every two electrons transferred, four hydrogen ions are translocated across the cytoplasmic membrane), and thus conserves the redox energy in a proton gradient. This Chloroherpeton thalassium (strain ATCC 35110 / GB-78) protein is NADH-quinone oxidoreductase subunit C.